Here is a 259-residue protein sequence, read N- to C-terminus: Small ribosomal subunit protein uS2 (259 aa).

Positions Lys232–Lys259 are disordered.

This sequence belongs to the universal ribosomal protein uS2 family.

The protein is Small ribosomal subunit protein uS2 of Maridesulfovibrio salexigens (strain ATCC 14822 / DSM 2638 / NCIMB 8403 / VKM B-1763) (Desulfovibrio salexigens).